A 667-amino-acid chain; its full sequence is Ribosomal oxygenase 1 (667 aa).

Met1 is subject to N-acetylmethionine. Residues 1–11 (MDGLRASAGLL) are compositionally biased toward low complexity. Residues 1–99 (MDGLRASAGL…ATGREPHGQL (99 aa)) form a disordered region. 2 stretches are compositionally biased toward basic residues: residues 12–22 (RRGRLRRRRQQ) and 35–44 (RPRKIRRQLR). Ser61, Ser64, and Ser108 each carry phosphoserine. Residues 322 to 467 (CSLRLLCPQA…DFLEAVLPLA (146 aa)) form the JmjC domain. Fe cation contacts are provided by His368, Asp370, and His433.

The protein belongs to the ROX family. NO66 subfamily. Interacts with SP7/OSX; the interaction is direct. Interacts with MYC. Interacts with PHF19; leading to its recruitment to H3K36me3 sites. Requires Fe(2+) as cofactor.

Its subcellular location is the nucleus. The protein localises to the nucleolus. The protein resides in the nucleoplasm. The enzyme catalyses N(6),N(6)-dimethyl-L-lysyl(36)-[histone H3] + 2 2-oxoglutarate + 2 O2 = L-lysyl(36)-[histone H3] + 2 formaldehyde + 2 succinate + 2 CO2. The catalysed reaction is N(6)-methyl-L-lysyl-[protein] + 2-oxoglutarate + O2 = L-lysyl-[protein] + formaldehyde + succinate + CO2. It carries out the reaction L-histidyl-[protein] + 2-oxoglutarate + O2 = (3S)-3-hydroxy-L-histidyl-[protein] + succinate + CO2. Functionally, oxygenase that can act as both a histone lysine demethylase and a ribosomal histidine hydroxylase. Specifically demethylates 'Lys-4' (H3K4me) and 'Lys-36' (H3K36me) of histone H3, thereby playing a central role in histone code. Preferentially demethylates trimethylated H3 'Lys-4' (H3K4me3) and monomethylated H3 'Lys-4' (H3K4me1) residues, while it has weaker activity for dimethylated H3 'Lys-36' (H3K36me2). Acts as a regulator of osteoblast differentiation via its interaction with SP7/OSX by demethylating H3K4me and H3K36me, thereby inhibiting SP7/OSX-mediated promoter activation. Also catalyzes demethylation of non-histone proteins, such as CGAS: demethylation of monomethylated CGAS promotes interaction between CGAS and PARP1, followed by PARP1 inactivation. Also catalyzes the hydroxylation of 60S ribosomal protein L8 on 'His-216', thereby playing a role in ribosome biogenesis. Participates in MYC-induced transcriptional activation. This is Ribosomal oxygenase 1 (RIOX1) from Bos taurus (Bovine).